A 301-amino-acid chain; its full sequence is NADH-cytochrome b5 reductase 3 (301 aa).

Glycine 2 is lipidated: N-myristoyl glycine. An FAD-binding FR-type domain is found at 40 to 152 (DIKYPLRLID…RGPSGLLVYQ (113 aa)). Lysine 42 bears the N6-acetyllysine mark. Residue tyrosine 43 is modified to Phosphotyrosine. Residues arginine 92, proline 93, tyrosine 94, valine 109, lysine 111, and phenylalanine 114 each contribute to the FAD site. Lysine 120 is modified (N6-acetyllysine). 4 residues coordinate FAD: lysine 126, methionine 127, serine 128, and threonine 185.

This sequence belongs to the flavoprotein pyridine nucleotide cytochrome reductase family. Component of a complex composed of cytochrome b5, NADH-cytochrome b5 reductase (CYB5R3) and MTARC2. Interacts with MTLN; the interaction is required to maintain cellular lipid composition and leads to stimulation of mitochondrial respiratory complex I activity. FAD is required as a cofactor. As to expression, expressed at late stages of erythroid maturation.

It is found in the endoplasmic reticulum membrane. It localises to the mitochondrion outer membrane. The protein localises to the cytoplasm. The enzyme catalyses 2 Fe(III)-[cytochrome b5] + NADH = 2 Fe(II)-[cytochrome b5] + NAD(+) + H(+). Functionally, catalyzes the reduction of two molecules of cytochrome b5 using NADH as the electron donor. The polypeptide is NADH-cytochrome b5 reductase 3 (Homo sapiens (Human)).